The sequence spans 327 residues: Polyprenyl transferase andD (327 aa).

8 consecutive transmembrane segments (helical) span residues 49 to 69 (LGYI…ASIA), 81 to 101 (ITLL…WDDI), 140 to 160 (FAFV…MLFF), 174 to 194 (PQLI…GLNL), 201 to 221 (IPMA…DIIY), 244 to 264 (CLDA…VIAG), 271 to 291 (APFF…LAMA), and 307 to 327 (CCTS…VWRS).

The protein belongs to the UbiA prenyltransferase family. Requires Mg(2+) as cofactor.

It is found in the membrane. The protein operates within secondary metabolite biosynthesis; terpenoid biosynthesis. Its function is as follows. Polyprenyl transferase; part of the gene cluster that mediates the biosynthesis of anditomin, a fungal meroterpenoid. The first step of the pathway is the synthesis of 3,5-dimethylorsellinic acid (DMOA) by the polyketide synthase andM. DMOA is then converted to the phthalide compound 5,7-dihydroxy-4,6-dimethylphthalide (DHDMP) by the cytochrome P450 monooxygenase andK, which is further prenylated by the prenyltransferase andD to yield farnesyl-DHDMP. Further epoxidation by the FAD-dependent monooxygenase andE leads to epoxyfarnesyl-DHDMP. The next step involves the terpene cyclase andB that converts epoxyfarnesyl-DHDMP into preandiloid A through opening of the epoxide ring followed by the cyclization of the farnesyl moiety. Preandiloid A is in turn oxidized at the C-3 hydroxyl group to yield preandiloid B by the dehydrogenase andC. The dioxygenase andA is solely responsible for the dehydrogenation of preandiloid B leading to the enone preandiloid C, as well as for the intriguing structural rearrangement to generate the bicyclo[2.2.2]octane core, transforming preandiloid C into andiconin. FAD-binding monooxygenase andJ then produces andilesin D which is reduced by dehydrogenase andI to yield andilesin A. Action of acetyltransferase andG followed by a spontaneous acetate elimination leads then to andilesin B, which is in turn substrate of the short chain dehydrogenase andH to yield andilesin C. Finally, the dioxygenase andF catalyzes the transformation of andilesin C to anditomin. The chain is Polyprenyl transferase andD from Emericella variicolor (Aspergillus stellatus).